The primary structure comprises 314 residues: MNLNIITEKDKKQSYNLNKLQKRLRRNVGNAIADFNMIENGDKVMVCLSGGKDSYTLLDILLNLRLNAPIHFDIVAVNLDQKQPGFPEHILPEYLKSISVDYKIVAENTYGIVKEKIPEGKTTCSLCSRLRRGILYRTATELGATKIALGHHRDDMLETLFLNMFYGGKLKSMPPKLISDDGKQIVIRPLAYCKEKDIEKYAVAKQFPIIPCNLCGSQPNLQRQVVKEMLQKWDRQYPGRIETMFSAIQNIVPSHLCDSNLFDFKRIRHGKIPEGIEGDIAFDKEAFSPTPLVQENDEKIDFIQGEMISFKEVN.

Positions 49–54 (SGGKDS) match the PP-loop motif motif. [4Fe-4S] cluster-binding residues include Cys-124, Cys-127, and Cys-215.

This sequence belongs to the TtcA family. In terms of assembly, homodimer. It depends on Mg(2+) as a cofactor. The cofactor is [4Fe-4S] cluster.

It localises to the cytoplasm. It catalyses the reaction cytidine(32) in tRNA + S-sulfanyl-L-cysteinyl-[cysteine desulfurase] + AH2 + ATP = 2-thiocytidine(32) in tRNA + L-cysteinyl-[cysteine desulfurase] + A + AMP + diphosphate + H(+). It participates in tRNA modification. Functionally, catalyzes the ATP-dependent 2-thiolation of cytidine in position 32 of tRNA, to form 2-thiocytidine (s(2)C32). The sulfur atoms are provided by the cysteine/cysteine desulfurase (IscS) system. The protein is tRNA-cytidine(32) 2-sulfurtransferase of Histophilus somni (strain 129Pt) (Haemophilus somnus).